The following is a 158-amino-acid chain: SsrA-binding protein (158 aa).

Positions 130–158 (KGKKNHDKREAQAKRDWSRQKQRLLKDHG) are disordered. The span at 136-158 (DKREAQAKRDWSRQKQRLLKDHG) shows a compositional bias: basic and acidic residues.

It belongs to the SmpB family.

The protein localises to the cytoplasm. Required for rescue of stalled ribosomes mediated by trans-translation. Binds to transfer-messenger RNA (tmRNA), required for stable association of tmRNA with ribosomes. tmRNA and SmpB together mimic tRNA shape, replacing the anticodon stem-loop with SmpB. tmRNA is encoded by the ssrA gene; the 2 termini fold to resemble tRNA(Ala) and it encodes a 'tag peptide', a short internal open reading frame. During trans-translation Ala-aminoacylated tmRNA acts like a tRNA, entering the A-site of stalled ribosomes, displacing the stalled mRNA. The ribosome then switches to translate the ORF on the tmRNA; the nascent peptide is terminated with the 'tag peptide' encoded by the tmRNA and targeted for degradation. The ribosome is freed to recommence translation, which seems to be the essential function of trans-translation. The protein is SsrA-binding protein of Ruegeria sp. (strain TM1040) (Silicibacter sp.).